We begin with the raw amino-acid sequence, 514 residues long: Cytochrome P450 87A3 (514 aa).

The next 2 membrane-spanning stretches (helical) occupy residues 36 to 56 and 315 to 335; these read ASSMAYIALLCAALAAVVALL and LMFVLLFASFETTALALTIGV. A heme-binding site is contributed by C463.

Belongs to the cytochrome P450 family. Requires heme as cofactor. Expressed in roots and coleoptiles, but not in leaves.

It is found in the cytoplasmic vesicle membrane. In Oryza sativa subsp. japonica (Rice), this protein is Cytochrome P450 87A3 (CYP87A3).